Reading from the N-terminus, the 298-residue chain is Anamorsin homolog (298 aa).

The tract at residues 1–143 (MTQLIITHQS…IKAEKPSWKP (143 aa)) is N-terminal SAM-like domain. The linker stretch occupies residues 143-162 (PEEGKVLVDDIDLEGSVPDI). [2Fe-2S] cluster contacts are provided by cysteine 175, cysteine 182, cysteine 185, and cysteine 187. The tract at residues 175-187 (CKSKERACNNCNC) is fe-S binding site A. Residues cysteine 218, cysteine 221, cysteine 229, and cysteine 232 each contribute to the [4Fe-4S] cluster site. 2 consecutive short sequence motifs (cx2C motif) follow at residues 218-221 (CGNC) and 229-232 (CSGC). Residues 218–232 (CGNCYLGDAFRCSGC) are fe-S binding site B.

This sequence belongs to the anamorsin family. Monomer. The cofactor is [2Fe-2S] cluster. [4Fe-4S] cluster is required as a cofactor.

It is found in the cytoplasm. The protein resides in the mitochondrion intermembrane space. Functionally, component of the cytosolic iron-sulfur (Fe-S) protein assembly (CIA) machinery. Required for the maturation of extramitochondrial Fe-S proteins. Part of an electron transfer chain functioning in an early step of cytosolic Fe-S biogenesis, facilitating the de novo assembly of a [4Fe-4S] cluster on the cytosolic Fe-S scaffold complex. Electrons are transferred from NADPH via a FAD- and FMN-containing diflavin oxidoreductase. Together with the diflavin oxidoreductase, also required for the assembly of the diferric tyrosyl radical cofactor of ribonucleotide reductase (RNR), probably by providing electrons for reduction during radical cofactor maturation in the catalytic small subunit. This chain is Anamorsin homolog, found in Cryptosporidium parvum (strain Iowa II).